The chain runs to 345 residues: MTIDNYDNSKQDSSKYEVSGTGDGRNGDGGLPLVQCVARARIPTTQGPDIFLHLYSNNRDNKEHLAIVFGEDIRSRSLFRRRQCETQQDRMIRGAYIGKLYPGRTVADEDDRLGLALEFDDSTGELLASKATTWDAHNDTLVRIHSECYTGENAWSARCDCGEQFDRAGRLIACDHEPTSNIKGGNGHGVIVYLRQEGRGIGLGEKLKAYNLQDLGADTVQANLMLKHPVDARDFSLGKAILLDLGIGNVRLLTNNPEKIKQVDHAPYLKCVERVPMVPIHWTNSSEGIDSKEIEGYLRTKIERMGHLLTEPLKLHTNPQPTETSEAQNQNRMNSALSSTSTLAI.

Positions 1 to 27 (MTIDNYDNSKQDSSKYEVSGTGDGRNG) are disordered. 143-147 (RIHSE) lines the GTP pocket. Positions 148, 159, and 161 each coordinate Zn(2+). GTP is bound by residues Gln-164, 197–199 (EGR), and Thr-219. Catalysis depends on Asp-231, which acts as the Proton acceptor. Arg-233 serves as the catalytic Nucleophile. Positions 254 and 259 each coordinate GTP. The tract at residues 312–345 (PLKLHTNPQPTETSEAQNQNRMNSALSSTSTLAI) is disordered. A compositionally biased stretch (polar residues) spans 317–345 (TNPQPTETSEAQNQNRMNSALSSTSTLAI).

Belongs to the GTP cyclohydrolase II family. Zn(2+) is required as a cofactor.

It catalyses the reaction GTP + 4 H2O = 2,5-diamino-6-hydroxy-4-(5-phosphoribosylamino)-pyrimidine + formate + 2 phosphate + 3 H(+). It functions in the pathway cofactor biosynthesis; riboflavin biosynthesis; 5-amino-6-(D-ribitylamino)uracil from GTP: step 1/4. In terms of biological role, catalyzes the conversion of GTP to 2,5-diamino-6-ribosylamino-4(3H)-pyrimidinone 5'-phosphate (DARP), formate and pyrophosphate. This chain is GTP cyclohydrolase-2 (RIB1), found in Saccharomyces cerevisiae (strain ATCC 204508 / S288c) (Baker's yeast).